A 779-amino-acid polypeptide reads, in one-letter code: Glutathione biosynthesis bifunctional protein GshAB (779 aa).

The glutamate--cysteine ligase stretch occupies residues 1-346 (MAFSKNILDS…ETANRNQEQA (346 aa)). An ATP-grasp domain is found at 512–768 (KKILDQAGIN…LDDKILDALG (257 aa)). 539–597 (PYYRGRAIVIKPKSTNFGIGITIIKENNRHDFFAQGIAQAFKHEATVLIENFSSGKEYR) lines the ATP pocket. Residues Asp719, Glu738, and Asn740 each coordinate Mg(2+). Residues Asp719, Glu738, and Asn740 each coordinate Mn(2+).

This sequence in the N-terminal section; belongs to the glutamate--cysteine ligase type 1 family. Type 2 subfamily. Monomer. Requires Mg(2+) as cofactor. It depends on Mn(2+) as a cofactor.

It catalyses the reaction L-cysteine + L-glutamate + ATP = gamma-L-glutamyl-L-cysteine + ADP + phosphate + H(+). The catalysed reaction is gamma-L-glutamyl-L-cysteine + glycine + ATP = glutathione + ADP + phosphate + H(+). Its pathway is sulfur metabolism; glutathione biosynthesis; glutathione from L-cysteine and L-glutamate: step 1/2. It functions in the pathway sulfur metabolism; glutathione biosynthesis; glutathione from L-cysteine and L-glutamate: step 2/2. Functionally, synthesizes glutathione from L-glutamate and L-cysteine via gamma-L-glutamyl-L-cysteine. This Desulfotalea psychrophila (strain LSv54 / DSM 12343) protein is Glutathione biosynthesis bifunctional protein GshAB.